A 565-amino-acid chain; its full sequence is Ubiquitin carboxyl-terminal hydrolase 21 (565 aa).

Basic and acidic residues predominate over residues 1–14; the sequence is MPQASEHRLGRTRE. Positions 1–103 are disordered; that stretch reads MPQASEHRLG…PPPTVALPLP (103 aa). Residues 48–57 show a composition bias toward pro residues; sequence MLRPLPPRPG. Over residues 58–70 the composition is skewed to basic and acidic residues; the sequence is LPDERLKKLELGR. Positions 134 to 152 match the Nuclear export signal motif; that stretch reads ELGAALSRLALRPEPPTLR. The USP domain occupies 212-558; the sequence is VGLRNLGNTC…EGYVLFYQLM (347 aa). Catalysis depends on cysteine 221, which acts as the Nucleophile. Positions 384, 387, 437, and 440 each coordinate Zn(2+). Histidine 518 functions as the Proton acceptor in the catalytic mechanism.

It belongs to the peptidase C19 family. USP21 subfamily. As to quaternary structure, interacts with BEND3. As to expression, highly expressed in heart, pancreas and skeletal muscle. Also expressed in brain, placenta, liver and kidney, and at very low level in lung.

It is found in the cytoplasm. It localises to the nucleus. It carries out the reaction Thiol-dependent hydrolysis of ester, thioester, amide, peptide and isopeptide bonds formed by the C-terminal Gly of ubiquitin (a 76-residue protein attached to proteins as an intracellular targeting signal).. Functionally, deubiquitinates histone H2A, a specific tag for epigenetic transcriptional repression, thereby acting as a coactivator. Deubiquitination of histone H2A releaves the repression of di- and trimethylation of histone H3 at 'Lys-4', resulting in regulation of transcriptional initiation. Regulates gene expression via histone H2A deubiquitination. Deubiquitinates BAZ2A/TIP5 leading to its stabilization. Also capable of removing NEDD8 from NEDD8 conjugates but has no effect on Sentrin-1 conjugates. Also acts as a negative regulator of the ribosome quality control (RQC) by mediating deubiquitination of 40S ribosomal proteins RPS10/eS10 and RPS20/uS10, thereby antagonizing ZNF598-mediated 40S ubiquitination. The chain is Ubiquitin carboxyl-terminal hydrolase 21 from Homo sapiens (Human).